A 413-amino-acid polypeptide reads, in one-letter code: Multifunctional CCA protein (413 aa).

G8 and R11 together coordinate ATP. CTP is bound by residues G8 and R11. Residues D21 and D23 each coordinate Mg(2+). ATP contacts are provided by R91, R137, and R140. CTP contacts are provided by R91, R137, and R140. Positions 228–329 constitute an HD domain; it reads TGVHTLMTLS…VKLFDAIDAW (102 aa).

The protein belongs to the tRNA nucleotidyltransferase/poly(A) polymerase family. Bacterial CCA-adding enzyme type 1 subfamily. In terms of assembly, monomer. Can also form homodimers and oligomers. It depends on Mg(2+) as a cofactor. Ni(2+) is required as a cofactor.

The enzyme catalyses a tRNA precursor + 2 CTP + ATP = a tRNA with a 3' CCA end + 3 diphosphate. It carries out the reaction a tRNA with a 3' CCA end + 2 CTP + ATP = a tRNA with a 3' CCACCA end + 3 diphosphate. Catalyzes the addition and repair of the essential 3'-terminal CCA sequence in tRNAs without using a nucleic acid template. Adds these three nucleotides in the order of C, C, and A to the tRNA nucleotide-73, using CTP and ATP as substrates and producing inorganic pyrophosphate. tRNA 3'-terminal CCA addition is required both for tRNA processing and repair. Also involved in tRNA surveillance by mediating tandem CCA addition to generate a CCACCA at the 3' terminus of unstable tRNAs. While stable tRNAs receive only 3'-terminal CCA, unstable tRNAs are marked with CCACCA and rapidly degraded. In Salmonella agona (strain SL483), this protein is Multifunctional CCA protein.